A 305-amino-acid polypeptide reads, in one-letter code: UDP-3-O-acyl-N-acetylglucosamine deacetylase (305 aa).

Zn(2+) contacts are provided by His-79, His-238, and Asp-242. Catalysis depends on His-265, which acts as the Proton donor.

Belongs to the LpxC family. Zn(2+) serves as cofactor.

It catalyses the reaction a UDP-3-O-[(3R)-3-hydroxyacyl]-N-acetyl-alpha-D-glucosamine + H2O = a UDP-3-O-[(3R)-3-hydroxyacyl]-alpha-D-glucosamine + acetate. It participates in glycolipid biosynthesis; lipid IV(A) biosynthesis; lipid IV(A) from (3R)-3-hydroxytetradecanoyl-[acyl-carrier-protein] and UDP-N-acetyl-alpha-D-glucosamine: step 2/6. Functionally, catalyzes the hydrolysis of UDP-3-O-myristoyl-N-acetylglucosamine to form UDP-3-O-myristoylglucosamine and acetate, the committed step in lipid A biosynthesis. The sequence is that of UDP-3-O-acyl-N-acetylglucosamine deacetylase from Enterobacter sp. (strain 638).